A 338-amino-acid chain; its full sequence is Eukaryotic translation initiation factor 3 subunit H (338 aa).

The MPN domain occupies 22–154 (VQCDGLAVMK…LKAYRLTPQA (133 aa)).

Belongs to the eIF-3 subunit H family. In terms of assembly, component of the eukaryotic translation initiation factor 3 (eIF-3) complex. The eIF-3 complex interacts with pix. Interacts with mxt.

It localises to the cytoplasm. Component of the eukaryotic translation initiation factor 3 (eIF-3) complex, which is involved in protein synthesis of a specialized repertoire of mRNAs and, together with other initiation factors, stimulates binding of mRNA and methionyl-tRNAi to the 40S ribosome. The eIF-3 complex specifically targets and initiates translation of a subset of mRNAs involved in cell proliferation. The protein is Eukaryotic translation initiation factor 3 subunit H of Drosophila sechellia (Fruit fly).